The sequence spans 501 residues: U6 snRNA (guanine-N(2))-methyltransferase THUMPD2 (501 aa).

In terms of domain architecture, THUMP spans 149–264 (TEQIQELQET…DVYSVLGIPV (116 aa)). Residues 414–469 (LKGGEASSGPLNSQGGHTEEPGGEERLTPAEKAAVSEPVSSPFAASNQGRLDRMPP) form a disordered region. The segment covering 430–442 (HTEEPGGEERLTP) has biased composition (basic and acidic residues).

The protein belongs to the methyltransferase superfamily. In terms of assembly, part of the heterodimeric THUMPD2-TRM112 methyltransferase complex; this complex forms an active tRNA methyltransferase, where TRMT112 acts as an activator of the catalytic subunit THUMPD2.

The protein resides in the nucleus. It carries out the reaction guanosine in U6 snRNA + S-adenosyl-L-methionine = N(2)-methylguanosine in U6 snRNA + S-adenosyl-L-homocysteine + H(+). Its function is as follows. Catalytic subunit of the THUMPD2-TRM112 methyltransferase complex, that specifically mediates the S-adenosyl-L-methionine-dependent N(2)-methylation of guanosine nucleotides, most probably at position 72 (m2G72), in the U6snRNA of the major spliceosome. This modification in the U6 snRNA affects the constitutive splicing efficiency of introns that have suboptimal splice sites and can impact final mRNA levels. The protein is U6 snRNA (guanine-N(2))-methyltransferase THUMPD2 of Bos taurus (Bovine).